A 247-amino-acid chain; its full sequence is 14-3-3 protein zeta (247 aa).

The protein belongs to the 14-3-3 family. In terms of assembly, homodimer.

It localises to the cytoplasm. Functionally, adapter protein implicated in the regulation of a large spectrum of both general and specialized signaling pathways. Binds to a large number of partners, usually by recognition of a phosphoserine or phosphothreonine motif. Binding generally results in the modulation of the activity of the binding partner. This is 14-3-3 protein zeta (14-3-3zeta) from Bombyx mori (Silk moth).